Consider the following 672-residue polypeptide: tRNA 5-methylaminomethyl-2-thiouridine biosynthesis bifunctional protein MnmC (672 aa).

The interval methionine 1–glutamate 243 is tRNA (mnm(5)s(2)U34)-methyltransferase. The tract at residues isoleucine 269–leucine 672 is FAD-dependent cmnm(5)s(2)U34 oxidoreductase.

In the N-terminal section; belongs to the methyltransferase superfamily. tRNA (mnm(5)s(2)U34)-methyltransferase family. This sequence in the C-terminal section; belongs to the DAO family. FAD serves as cofactor.

It localises to the cytoplasm. It catalyses the reaction 5-aminomethyl-2-thiouridine(34) in tRNA + S-adenosyl-L-methionine = 5-methylaminomethyl-2-thiouridine(34) in tRNA + S-adenosyl-L-homocysteine + H(+). Catalyzes the last two steps in the biosynthesis of 5-methylaminomethyl-2-thiouridine (mnm(5)s(2)U) at the wobble position (U34) in tRNA. Catalyzes the FAD-dependent demodification of cmnm(5)s(2)U34 to nm(5)s(2)U34, followed by the transfer of a methyl group from S-adenosyl-L-methionine to nm(5)s(2)U34, to form mnm(5)s(2)U34. The protein is tRNA 5-methylaminomethyl-2-thiouridine biosynthesis bifunctional protein MnmC of Vibrio vulnificus (strain CMCP6).